Reading from the N-terminus, the 90-residue chain is U7-theraphotoxin-Hhn1a 8 (90 aa).

Residues 1–19 form the signal peptide; that stretch reads MKTAIFTVVLALAVFAVLS. The propeptide occupies 20–50; sequence FGWEANEKALSEEFTELIHEKGAASETEARE. Intrachain disulfides connect Cys51–Cys65, Cys58–Cys70, and Cys64–Cys81.

The protein belongs to the neurotoxin 10 (Hwtx-1) family. 13 (Hntx-13) subfamily. As to expression, expressed by the venom gland.

It is found in the secreted. Ion channel inhibitor. The protein is U7-theraphotoxin-Hhn1a 8 of Cyriopagopus hainanus (Chinese bird spider).